The primary structure comprises 463 residues: MLAFLNQVRKPTLDLPLDVRRKMWFKPFMQSYLVVFIGYLTMYLIRKNFNIAQNDMISTYGLSMTELGMIGLGFSITYGVGKTLVSYYADGKNTKQFLPFMLILSAICMLGFSASMGAGSTSLFLMIAFYALSGFFQSTGGSCSYSTITKWTPRRKRGTFLGFWNISHNLGGAGAAGVALFGANYLFDGHVIGMFIFPSIIALIVGFIGLRFGSDSPESYGLGKAEELFGEEISEEDKETEENEMTKWQIFVEYVLKNKVIWLLCFSNIFLYVVRIGIDQWSTVYAFQELKLSKEVAIQGFTLFEVGALVGTLLWGWLSDLANGRRALVACVALALIIATLGVYQHASNQYVYLASLFALGFLVFGPQLLIGVAAVGFVPKKAIGAADGIKGTFAYLIGDSFAKLGLGMIADGTPVFGLTGWAGTFAALDAAAIGCICLMAMVAVMEERKIRREKKIQQVNIA.

Topologically, residues 1-24 (MLAFLNQVRKPTLDLPLDVRRKMW) are cytoplasmic. Residues 25 to 45 (FKPFMQSYLVVFIGYLTMYLI) form a helical membrane-spanning segment. Residues 46-60 (RKNFNIAQNDMISTY) are Periplasmic-facing. Residues 61–81 (GLSMTELGMIGLGFSITYGVG) form a helical membrane-spanning segment. At 82 to 96 (KTLVSYYADGKNTKQ) the chain is on the cytoplasmic side. Residues 97–117 (FLPFMLILSAICMLGFSASMG) form a helical membrane-spanning segment. Residues 118–122 (AGSTS) are Periplasmic-facing. Residues 123–143 (LFLMIAFYALSGFFQSTGGSC) traverse the membrane as a helical segment. Residues 144 to 159 (SYSTITKWTPRRKRGT) lie on the Cytoplasmic side of the membrane. Residues 160 to 180 (FLGFWNISHNLGGAGAAGVAL) traverse the membrane as a helical segment. Residues 181–189 (FGANYLFDG) are Periplasmic-facing. Residues 190–210 (HVIGMFIFPSIIALIVGFIGL) traverse the membrane as a helical segment. At 211-259 (RFGSDSPESYGLGKAEELFGEEISEEDKETEENEMTKWQIFVEYVLKNK) the chain is on the cytoplasmic side. The helical transmembrane segment at 260–280 (VIWLLCFSNIFLYVVRIGIDQ) threads the bilayer. At 281–297 (WSTVYAFQELKLSKEVA) the chain is on the periplasmic side. Residues 298–318 (IQGFTLFEVGALVGTLLWGWL) form a helical membrane-spanning segment. Topologically, residues 319 to 326 (SDLANGRR) are cytoplasmic. A helical membrane pass occupies residues 327-347 (ALVACVALALIIATLGVYQHA). Residues 348 to 357 (SNQYVYLASL) lie on the Periplasmic side of the membrane. The chain crosses the membrane as a helical span at residues 358–378 (FALGFLVFGPQLLIGVAAVGF). Residues 379–382 (VPKK) are Cytoplasmic-facing. The chain crosses the membrane as a helical span at residues 383–403 (AIGAADGIKGTFAYLIGDSFA). The Periplasmic segment spans residues 404–425 (KLGLGMIADGTPVFGLTGWAGT). A helical membrane pass occupies residues 426–446 (FAALDAAAIGCICLMAMVAVM). The Cytoplasmic segment spans residues 447-463 (EERKIRREKKIQQVNIA).

The protein belongs to the major facilitator superfamily. Organophosphate:Pi antiporter (OPA) (TC 2.A.1.4) family.

It localises to the cell inner membrane. Its function is as follows. Mediates the exchange of external hexose 6-phosphate and internal inorganic phosphate. The chain is Hexose-6-phosphate:phosphate antiporter (uhpT) from Salmonella typhimurium (strain LT2 / SGSC1412 / ATCC 700720).